The primary structure comprises 2448 residues: Non-reducing polyketide synthase mapC (2448 aa).

Residues 14-226 (VLFGPQCPDI…HHEAHREGIQ (213 aa)) are N-terminal acylcarrier protein transacylase domain (SAT). A disordered region spans residues 330 to 350 (GFSNESPQPSTASLSNSVQTF). Residues 359–775 (ASPIAITGMA…GSNAALIVKE (417 aa)) enclose the Ketosynthase family 3 (KS3) domain. Catalysis depends on for beta-ketoacyl synthase activity residues Cys524, His659, and His698. Residues 885–1188 (LCFGGQNGLT…HKIDLGGSSG (304 aa)) form a malonyl-CoA:ACP transacylase (MAT) domain region. Ser972 acts as the For acyl/malonyl transferase activity in catalysis. Positions 1256–1388 (GQEAGLLCQL…GTVCLHQERS (133 aa)) are N-terminal hotdog fold. The PKS/mFAS DH domain maps to 1256–1565 (GQEAGLLCQL…FTSVSIRSLT (310 aa)). Residues 1261–1564 (LLCQLSESPD…RFTSVSIRSL (304 aa)) form a product template (PT) domain region. His1290 serves as the catalytic Proton acceptor; for dehydratase activity. Positions 1414–1565 (ASNGLKGSTV…FTSVSIRSLT (152 aa)) are C-terminal hotdog fold. Asp1471 acts as the Proton donor; for dehydratase activity in catalysis. A Carrier domain is found at 1610 to 1684 (AKDLATVQEM…GLVEHIFPGH (75 aa)). O-(pantetheine 4'-phosphoryl)serine is present on Ser1644. The interval 1841-2076 (PYALEHDLLQ…GFEWVDWTNN (236 aa)) is methyltransferase (CMeT) domain. Active-site for thioesterase activity residues include Ser2227, Asp2385, and His2417.

It localises to the cytoplasm. It is found in the cytosol. It catalyses the reaction 3 malonyl-CoA + acetyl-CoA + S-adenosyl-L-methionine + H(+) = 5-methylorsellinate + S-adenosyl-L-homocysteine + 3 CO2 + 4 CoA. Its pathway is secondary metabolite biosynthesis; terpenoid biosynthesis. Functionally, non-reducing polyketide synthase; part of the gene cluster that mediates the biosynthesis of mycophenolic acid (MPA), the first isolated antibiotic natural product in the world obtained from a culture of Penicillium brevicompactum in 1893. MpaC catalyzes the synthesis of 5-methylorsellinic acid (5MOA) via the condensation of 1 acetyl-CoA starter unit with 3 malonyl-CoA units and one methylation step. The first step of the pathway is the synthesis of 5-methylorsellinic acid (5MOA) by the cytosolic polyketide synthase mpaC. 5MOA is then converted to the phthalide compound 5,7-dihydroxy-4,6-dimethylphthalide (DHMP) by the endoplasmic reticulum-bound cytochrome P450 monooxygenase mpaDE. MpaDE first catalyzes hydroxylation of 5-MOA to 4,6-dihydroxy-2-(hydroxymethyl)-3-methylbenzoic acid (DHMB). MpaDE then acts as a lactone synthase that catalyzes the ring closure to convert DHMB into DHMP. The next step is the prenylation of DHMP by the Golgi apparatus-associated prenyltransferase mpaA to yield farnesyl-DHMP (FDHMP). The ER-bound oxygenase mpaB then mediates the oxidative cleavage the C19-C20 double bond in FDHMP to yield FDHMP-3C via a mycophenolic aldehyde intermediate. The O-methyltransferase mpaG catalyzes the methylation of FDHMP-3C to yield MFDHMP-3C. After the cytosolic methylation of FDHMP-3C, MFDHMP-3C enters into peroxisomes probably via free diffusion due to its low molecular weight. Upon a peroxisomal CoA ligation reaction, catalyzed by a beta-oxidation component enzyme acyl-CoA ligase ACL891, MFDHMP-3C-CoA would then be restricted to peroxisomes for the following beta-oxidation pathway steps. The peroxisomal beta-oxidation machinery than converts MFDHMP-3C-CoA into MPA_CoA, via a beta-oxidation chain-shortening process. Finally mpaH acts as a peroxisomal acyl-CoA hydrolase with high substrate specificity toward MPA-CoA to release the final product MPA. The sequence is that of Non-reducing polyketide synthase mapC from Penicillium brevicompactum.